A 212-amino-acid polypeptide reads, in one-letter code: Eggshell protein 1 (212 aa).

The signal sequence occupies residues 1 to 27 (MKSSLTLLFLAAIGYTIAYPPPSDYDS). Residues 155 to 212 (RKNGHGKGGKGGNGGGGGKGGGKGGGNGKGNGKGGGGKNGGGKGGNGGKGGSYAPSYY) are disordered. Residues 163 to 205 (GKGGNGGGGGKGGGKGGGNGKGNGKGGGGKNGGGKGGNGGKGG) are compositionally biased toward gly residues.

As to expression, detected only in mature female parasites.

The polypeptide is Eggshell protein 1 (ESG-1) (Schistosoma japonicum (Blood fluke)).